We begin with the raw amino-acid sequence, 550 residues long: Kinase suppressor of Ras B (550 aa).

2 stretches are compositionally biased toward low complexity: residues 21–56 (SFSS…SNPI) and 63–75 (ATSS…STSS). Positions 21–87 (SFSSWRRSST…PPPASAPPRI (67 aa)) are disordered. Residues 90-145 (YHKMVPSKSKFRQCDVCEHIFIFDFVRKQHLDDVYACNVCGIRVHKGCLDRVKNDC) form a Phorbol-ester/DAG-type zinc finger. The segment at 172 to 196 (TTASISKSLTTSPTCSTSTTMSPAG) is disordered. Residues 177-193 (SKSLTTSPTCSTSTTMS) show a composition bias toward low complexity. One can recognise a Protein kinase domain in the interval 248 to 528 (VDVMTKIGDG…FQQIVKRITV (281 aa)). The tract at residues 530–550 (MPRKESNKQKRRSTAHENPLF) is disordered.

This sequence belongs to the protein kinase superfamily. TKL Ser/Thr protein kinase family. In terms of assembly, interacts with ndk-1.

Probable inactive protein kinase which positively regulates Ras-mediated signaling probably acting at the level of let-60/ras or/and lin-45/raf. In the germline, regulates meiotic progression during oogenesis and mpk-1 (isoform b) phosphorylation. Plays a role in meiotic recombination events. Functions redundantly with ksr-1 in the Ras-mediated regulation of larval survival, the development of excretory canal, in determining vulval precursor cell fate during vulval induction and in mpk-1 phosphorylation in somatic cells. This is Kinase suppressor of Ras B from Caenorhabditis elegans.